Consider the following 62-residue polypeptide: MVDYIQRPKSRFLRVKCNDCENEQIIFGSASRKITCVVCGRTLAEPTGGKSTITTHILEVLE.

Residues C17, C20, C36, and C39 each contribute to the Zn(2+) site. The C4-type zinc-finger motif lies at C17–C39.

The protein belongs to the eukaryotic ribosomal protein eS27 family. As to quaternary structure, part of the 30S ribosomal subunit. The cofactor is Zn(2+).

This chain is Small ribosomal subunit protein eS27, found in Methanosarcina barkeri (strain Fusaro / DSM 804).